Reading from the N-terminus, the 121-residue chain is Protein yippee (121 aa).

Residues 13-110 enclose the Yippee domain; the sequence is KLFNCAQCHT…LEYALITEAE (98 aa). Residues cysteine 17, cysteine 20, cysteine 73, and cysteine 76 each coordinate Zn(2+).

Belongs to the yippee family. Interacts with hemolin.

In Drosophila melanogaster (Fruit fly), this protein is Protein yippee.